A 453-amino-acid polypeptide reads, in one-letter code: Probable 1,4-beta-D-glucan cellobiohydrolase A (453 aa).

Residues 1–17 (MYQRALLFSALATAVSA) form the signal peptide. Catalysis depends on Glu226, which acts as the Nucleophile. Glu231 (proton donor) is an active-site residue. N-linked (GlcNAc...) asparagine glycosylation is present at Asn284.

It belongs to the glycosyl hydrolase 7 (cellulase C) family.

Its subcellular location is the secreted. The catalysed reaction is Hydrolysis of (1-&gt;4)-beta-D-glucosidic linkages in cellulose and cellotetraose, releasing cellobiose from the non-reducing ends of the chains.. In terms of biological role, the biological conversion of cellulose to glucose generally requires three types of hydrolytic enzymes: (1) Endoglucanases which cut internal beta-1,4-glucosidic bonds; (2) Exocellobiohydrolases that cut the disaccharide cellobiose from the non-reducing end of the cellulose polymer chain; (3) Beta-1,4-glucosidases which hydrolyze the cellobiose and other short cello-oligosaccharides to glucose. The polypeptide is Probable 1,4-beta-D-glucan cellobiohydrolase A (cbhA) (Aspergillus clavatus (strain ATCC 1007 / CBS 513.65 / DSM 816 / NCTC 3887 / NRRL 1 / QM 1276 / 107)).